Consider the following 225-residue polypeptide: Transmembrane protein C16orf54 homolog (225 aa).

Residues 32–52 form a helical membrane-spanning segment; sequence PCIPIMLGLASLTAFFIITTA. 2 disordered regions span residues 106–163 and 178–200; these read DRAP…ERPH and EAGL…EPDW. Residues Thr113 and Thr117 each carry the phosphothreonine modification. Positions 122–140 are enriched in low complexity; that stretch reads ATAPPATSAPYSSLSSLVP. Ser195 is modified (phosphoserine).

It localises to the membrane. In Mus musculus (Mouse), this protein is Transmembrane protein C16orf54 homolog.